The primary structure comprises 198 residues: ATP-dependent Clp protease proteolytic subunit 2 (198 aa).

Ser101 functions as the Nucleophile in the catalytic mechanism. Residue His126 is part of the active site.

This sequence belongs to the peptidase S14 family. As to quaternary structure, fourteen ClpP subunits assemble into 2 heptameric rings which stack back to back to give a disk-like structure with a central cavity, resembling the structure of eukaryotic proteasomes.

It is found in the cytoplasm. The enzyme catalyses Hydrolysis of proteins to small peptides in the presence of ATP and magnesium. alpha-casein is the usual test substrate. In the absence of ATP, only oligopeptides shorter than five residues are hydrolyzed (such as succinyl-Leu-Tyr-|-NHMec, and Leu-Tyr-Leu-|-Tyr-Trp, in which cleavage of the -Tyr-|-Leu- and -Tyr-|-Trp bonds also occurs).. Functionally, cleaves peptides in various proteins in a process that requires ATP hydrolysis. Has a chymotrypsin-like activity. Plays a major role in the degradation of misfolded proteins. This Thermosynechococcus vestitus (strain NIES-2133 / IAM M-273 / BP-1) protein is ATP-dependent Clp protease proteolytic subunit 2.